The following is a 329-amino-acid chain: UDP-N-acetylenolpyruvoylglucosamine reductase (329 aa).

The 165-residue stretch at 28 to 192 (RVGGPADLLC…ARVEVRLHAG (165 aa)) folds into the FAD-binding PCMH-type domain. Arg172 is an active-site residue. The disordered stretch occupies residues 202-227 (REDRERRRATQPLDRPTFGSTFTNPP). The active-site Proton donor is Ser221. Residue Glu291 is part of the active site. The tract at residues 307-329 (DGHAAAGGGPGAASGGVRPPEAT) is disordered. A compositionally biased stretch (gly residues) spans 311–320 (AAGGGPGAAS).

Belongs to the MurB family. FAD serves as cofactor.

The protein resides in the cytoplasm. It catalyses the reaction UDP-N-acetyl-alpha-D-muramate + NADP(+) = UDP-N-acetyl-3-O-(1-carboxyvinyl)-alpha-D-glucosamine + NADPH + H(+). Its pathway is cell wall biogenesis; peptidoglycan biosynthesis. In terms of biological role, cell wall formation. The protein is UDP-N-acetylenolpyruvoylglucosamine reductase of Anaeromyxobacter sp. (strain K).